The following is a 329-amino-acid chain: UDP-2,3-diacylglucosamine pyrophosphatase LpxG (329 aa).

The chain crosses the membrane as a helical span at residues 2-24 (FVSVGITASLTTILAAPVLTWVW). The a divalent metal cation site is built by D59, H61, D91, N123, H257, and H259.

It belongs to the metallophosphoesterase superfamily. LpxG family. Requires Mn(2+) as cofactor.

It localises to the cell inner membrane. It catalyses the reaction UDP-2,3-diacyl-alpha-D-glucosamine + H2O = 2,3-diacyl-alpha-D-glucosaminyl 1-phosphate + UMP + 2 H(+). It participates in glycolipid biosynthesis; lipid IV(A) biosynthesis. Hydrolyzes the pyrophosphate bond of UDP-2,3-diacylglucosamine to form 2,3-diacylglucosamine 1-phosphate (lipid X) and UMP by catalyzing the attack of water at the alpha-P atom. Involved in the biosynthesis of lipid A, a phosphorylated glycolipid that anchors the lipooligosaccharide (LOS) to the outer membrane of the cell. Can functionally complement lpxH deficiency in E.coli. Overexpression of LpxG results in toxic accumulation of lipid X and profoundly reduces the infectivity of C.trachomatis. Can utilize UDP-2-N,3-O-bis((3R)-3-hydroxytetradecanoyl)-alpha-D-glucosamine as substrate in vitro, but the substrate is likely UDP-2-N-((3R)-3-hydroxyicosanoyl),3-O-(tetradecanoyl)-alpha-D-glucosamine in vivo. This chain is UDP-2,3-diacylglucosamine pyrophosphatase LpxG, found in Chlamydia trachomatis serovar D (strain ATCC VR-885 / DSM 19411 / UW-3/Cx).